The sequence spans 151 residues: Small ribosomal subunit protein uS15 (151 aa).

Belongs to the universal ribosomal protein uS15 family.

This is Small ribosomal subunit protein uS15 (RPS13) from Candida maltosa (Yeast).